Reading from the N-terminus, the 287-residue chain is 4-hydroxybenzoate octaprenyltransferase (287 aa).

A run of 6 helical transmembrane segments spans residues 41-61 (WPLLVIFTLGTLLMRSAGCAM), 89-109 (WEAVAIAVGLSFIAFLLILPL), 133-153 (FFAIPQAYLGIAFGFGIPMAF), 158-178 (DTVPMLAWVMLVANIFWSVAY), 202-224 (FGRFDVAAVMACYAATLGIYVWI), and 266-286 (HNNWLGGVLFAGIAVHYLLAG).

The protein belongs to the UbiA prenyltransferase family. Requires Mg(2+) as cofactor.

The protein resides in the cell inner membrane. The enzyme catalyses all-trans-octaprenyl diphosphate + 4-hydroxybenzoate = 4-hydroxy-3-(all-trans-octaprenyl)benzoate + diphosphate. The protein operates within cofactor biosynthesis; ubiquinone biosynthesis. Functionally, catalyzes the prenylation of para-hydroxybenzoate (PHB) with an all-trans polyprenyl group. Mediates the second step in the final reaction sequence of ubiquinone-8 (UQ-8) biosynthesis, which is the condensation of the polyisoprenoid side chain with PHB, generating the first membrane-bound Q intermediate 3-octaprenyl-4-hydroxybenzoate. This Burkholderia orbicola (strain MC0-3) protein is 4-hydroxybenzoate octaprenyltransferase.